Reading from the N-terminus, the 181-residue chain is Acireductone dioxygenase (181 aa).

Residues His-97, His-99, Glu-103, and His-141 each contribute to the Fe(2+) site. 4 residues coordinate Ni(2+): His-97, His-99, Glu-103, and His-141.

It belongs to the acireductone dioxygenase (ARD) family. As to quaternary structure, monomer. The cofactor is Fe(2+). Ni(2+) serves as cofactor.

The catalysed reaction is 1,2-dihydroxy-5-(methylsulfanyl)pent-1-en-3-one + O2 = 3-(methylsulfanyl)propanoate + CO + formate + 2 H(+). It carries out the reaction 1,2-dihydroxy-5-(methylsulfanyl)pent-1-en-3-one + O2 = 4-methylsulfanyl-2-oxobutanoate + formate + 2 H(+). It participates in amino-acid biosynthesis; L-methionine biosynthesis via salvage pathway; L-methionine from S-methyl-5-thio-alpha-D-ribose 1-phosphate: step 5/6. Its function is as follows. Catalyzes 2 different reactions between oxygen and the acireductone 1,2-dihydroxy-3-keto-5-methylthiopentene (DHK-MTPene) depending upon the metal bound in the active site. Fe-containing acireductone dioxygenase (Fe-ARD) produces formate and 2-keto-4-methylthiobutyrate (KMTB), the alpha-ketoacid precursor of methionine in the methionine recycle pathway. Ni-containing acireductone dioxygenase (Ni-ARD) produces methylthiopropionate, carbon monoxide and formate, and does not lie on the methionine recycle pathway. This chain is Acireductone dioxygenase, found in Pseudomonas syringae pv. tomato (strain ATCC BAA-871 / DC3000).